The primary structure comprises 382 residues: Manganese peroxidase H4 (382 aa).

The N-terminal stretch at 1-24 is a signal peptide; the sequence is MAFGSLLAFVALAAITRAAPTAES. Intrachain disulfides connect Cys27/Cys39, Cys38/Cys313, Cys57/Cys141, Cys277/Cys344, and Cys366/Cys373. Mn(2+) is bound by residues Glu59 and Glu63. The active-site Proton acceptor is His70. Ca(2+)-binding residues include Asp71, Gly86, Asp88, and Ser90. N-linked (GlcNAc...) asparagine glycans are attached at residues Asn100 and Asn155. His197 is a heme b binding site. Ca(2+) is bound at residue Thr198. Position 203 (Asp203) interacts with Mn(2+). The Ca(2+) site is built by Asp215, Thr217, Thr220, and Asp222. The N-linked (GlcNAc...) asparagine glycan is linked to Asn241.

The protein belongs to the peroxidase family. Ligninase subfamily. Requires heme b as cofactor. It depends on Ca(2+) as a cofactor.

Its subcellular location is the secreted. The enzyme catalyses 2 Mn(2+) + H2O2 + 2 H(+) = 2 Mn(3+) + 2 H2O. In terms of biological role, catalyzes the oxidation of Mn(2+) to Mn(3+). The latter, acting as a diffusible redox mediator, is capable of oxidizing a variety of lignin compounds. This Phanerodontia chrysosporium (White-rot fungus) protein is Manganese peroxidase H4.